A 113-amino-acid chain; its full sequence is Putative membrane protein insertion efficiency factor (113 aa).

The protein belongs to the UPF0161 family.

The protein resides in the cell inner membrane. Could be involved in insertion of integral membrane proteins into the membrane. The sequence is that of Putative membrane protein insertion efficiency factor from Campylobacter jejuni subsp. jejuni serotype O:2 (strain ATCC 700819 / NCTC 11168).